A 266-amino-acid polypeptide reads, in one-letter code: Probable phosphoadenosine phosphosulfate reductase (266 aa).

A disordered region spans residues 219–246 (TQPVREGEDERAGRWRGREKTECGLHSH). Residues 223–243 (REGEDERAGRWRGREKTECGL) are compositionally biased toward basic and acidic residues.

This sequence belongs to the PAPS reductase family. CysH subfamily.

The protein localises to the cytoplasm. It is found in the nucleus. It catalyses the reaction [thioredoxin]-disulfide + sulfite + adenosine 3',5'-bisphosphate + 2 H(+) = [thioredoxin]-dithiol + 3'-phosphoadenylyl sulfate. It functions in the pathway sulfur metabolism; hydrogen sulfide biosynthesis; sulfite from sulfate: step 3/3. The NADP dependent reduction of PAPS into sulfite involves thioredoxin which probably plays the role of a thiol carrier. Required for methionine synthesis. The sequence is that of Probable phosphoadenosine phosphosulfate reductase (met16) from Schizosaccharomyces pombe (strain 972 / ATCC 24843) (Fission yeast).